We begin with the raw amino-acid sequence, 275 residues long: 2,3,4,5-tetrahydropyridine-2,6-dicarboxylate N-succinyltransferase (275 aa).

This sequence belongs to the transferase hexapeptide repeat family.

The protein resides in the cytoplasm. The enzyme catalyses (S)-2,3,4,5-tetrahydrodipicolinate + succinyl-CoA + H2O = (S)-2-succinylamino-6-oxoheptanedioate + CoA. It participates in amino-acid biosynthesis; L-lysine biosynthesis via DAP pathway; LL-2,6-diaminopimelate from (S)-tetrahydrodipicolinate (succinylase route): step 1/3. This Ralstonia pickettii (strain 12J) protein is 2,3,4,5-tetrahydropyridine-2,6-dicarboxylate N-succinyltransferase.